The chain runs to 199 residues: ATP synthase subunit b (199 aa).

The helical transmembrane segment at 5–25 (SFVTTLSVCVMILGLAALGFA) threads the bilayer.

This sequence belongs to the ATPase B chain family. As to quaternary structure, F-type ATPases have 2 components, F(1) - the catalytic core - and F(0) - the membrane proton channel. F(1) has five subunits: alpha(3), beta(3), gamma(1), delta(1), epsilon(1). F(0) has three main subunits: a(1), b(2) and c(10-14). The alpha and beta chains form an alternating ring which encloses part of the gamma chain. F(1) is attached to F(0) by a central stalk formed by the gamma and epsilon chains, while a peripheral stalk is formed by the delta and b chains.

The protein localises to the cell inner membrane. Its function is as follows. F(1)F(0) ATP synthase produces ATP from ADP in the presence of a proton or sodium gradient. F-type ATPases consist of two structural domains, F(1) containing the extramembraneous catalytic core and F(0) containing the membrane proton channel, linked together by a central stalk and a peripheral stalk. During catalysis, ATP synthesis in the catalytic domain of F(1) is coupled via a rotary mechanism of the central stalk subunits to proton translocation. In terms of biological role, component of the F(0) channel, it forms part of the peripheral stalk, linking F(1) to F(0). The polypeptide is ATP synthase subunit b (Citrifermentans bemidjiense (strain ATCC BAA-1014 / DSM 16622 / JCM 12645 / Bem) (Geobacter bemidjiensis)).